The chain runs to 431 residues: Adenylosuccinate synthetase (431 aa).

GTP contacts are provided by residues 12 to 18 and 40 to 42; these read GDEGKGK and GHT. Asp13 serves as the catalytic Proton acceptor. 2 residues coordinate Mg(2+): Asp13 and Gly40. Residues 13–16, 38–41, Thr130, Arg144, Gln225, Thr240, and Arg304 each bind IMP; these read DEGK and NAGH. His41 acts as the Proton donor in catalysis. Residue 300–306 participates in substrate binding; it reads STTGRPR. GTP-binding positions include Arg306, 332-334, and 414-416; these read KMD and SIG.

It belongs to the adenylosuccinate synthetase family. As to quaternary structure, homodimer. The cofactor is Mg(2+).

It localises to the cytoplasm. It catalyses the reaction IMP + L-aspartate + GTP = N(6)-(1,2-dicarboxyethyl)-AMP + GDP + phosphate + 2 H(+). Its pathway is purine metabolism; AMP biosynthesis via de novo pathway; AMP from IMP: step 1/2. In terms of biological role, plays an important role in the de novo pathway of purine nucleotide biosynthesis. Catalyzes the first committed step in the biosynthesis of AMP from IMP. The protein is Adenylosuccinate synthetase of Syntrophotalea carbinolica (strain DSM 2380 / NBRC 103641 / GraBd1) (Pelobacter carbinolicus).